Consider the following 441-residue polypeptide: Interferon-related developmental regulator 2 (441 aa).

The segment covering 1-15 (MPRARKGNTPRKGGQ) has biased composition (basic residues). The segment at 1–72 (MPRARKGNTP…TVDEQGPQED (72 aa)) is disordered. Residues 63–72 (TVDEQGPQED) are compositionally biased toward acidic residues.

Belongs to the IFRD family. As to quaternary structure, associates with ribosomes; promoting ribosome inactivation.

Its function is as follows. Ribosome-binding protein that acts as an inhibitor of mRNA translation by promoting ribosome inactivation. Associates with the P- and E-sites of the ribosome and inserts a C-terminal helix into the mRNA exit channel to preclude translation. The chain is Interferon-related developmental regulator 2 from Oryctolagus cuniculus (Rabbit).